The primary structure comprises 112 residues: MATPMIAGAAVAAAAVAGRYGILAWQAFKARPRVPRMRRFYEGGFQSSMTRREAALILGVRESVVADKVKEAHRRVMVANHPDAGGSHYLASKINEAKDMMLGKSNNSGSAF.

Position 2 is an N-acetylalanine (alanine 2). A helical transmembrane segment spans residues 6-28; sequence IAGAAVAAAAVAGRYGILAWQAF. The 60-residue stretch at 53–112 folds into the J domain; it reads EAALILGVRESVVADKVKEAHRRVMVANHPDAGGSHYLASKINEAKDMMLGKSNNSGSAF.

Belongs to the TIM14 family. In terms of assembly, probable component of the PAM complex at least composed of a mitochondrial HSP70 protein, TIMM44 and TIMM14. The complex interacts with the TIMM23 component of the TIM17:23 complex.

The protein resides in the mitochondrion. It is found in the mitochondrion inner membrane. Component of the PAM complex, a complex required for the translocation of transit peptide-containing proteins from the inner membrane into the mitochondrial matrix in an ATP-dependent manner. This is Mitochondrial import inner membrane translocase subunit TIM14-3 (TIM14-3) from Arabidopsis thaliana (Mouse-ear cress).